The sequence spans 530 residues: Glucose-6-phosphate isomerase (530 aa).

The active-site Proton donor is the glutamate 356. Residues histidine 387 and lysine 502 contribute to the active site.

Belongs to the GPI family.

Its subcellular location is the cytoplasm. The enzyme catalyses alpha-D-glucose 6-phosphate = beta-D-fructose 6-phosphate. The protein operates within carbohydrate biosynthesis; gluconeogenesis. Its pathway is carbohydrate degradation; glycolysis; D-glyceraldehyde 3-phosphate and glycerone phosphate from D-glucose: step 2/4. Its function is as follows. Catalyzes the reversible isomerization of glucose-6-phosphate to fructose-6-phosphate. The sequence is that of Glucose-6-phosphate isomerase from Borreliella burgdorferi (strain ATCC 35210 / DSM 4680 / CIP 102532 / B31) (Borrelia burgdorferi).